The sequence spans 321 residues: 26S proteasome non-ATPase regulatory subunit 7 (321 aa).

Residues 9–144 (VVVHPLVLLS…TEAYISVEEV (136 aa)) enclose the MPN domain. K180 is covalently cross-linked (Glycyl lysine isopeptide (Lys-Gly) (interchain with G-Cter in ubiquitin)). An N6-acetyllysine mark is found at K204, K214, K313, and K314. The interval 281–321 (ANRDAEKKEGQEKEESKKERKDDKEKEKSDAAKKEEKKEKK) is disordered.

It belongs to the peptidase M67A family. Component of the 19S proteasome regulatory particle complex. The 26S proteasome consists of a 20S core particle (CP) and two 19S regulatory subunits (RP). The regulatory particle is made of a lid composed of 9 subunits including PSMD7, a base containing 6 ATPases and few additional components. Within the complex, PSMD7 interacts with subunit PSMD4 through their respective MPN domain. Interacts with TRIM5.

Functionally, component of the 26S proteasome, a multiprotein complex involved in the ATP-dependent degradation of ubiquitinated proteins. This complex plays a key role in the maintenance of protein homeostasis by removing misfolded or damaged proteins, which could impair cellular functions, and by removing proteins whose functions are no longer required. Therefore, the proteasome participates in numerous cellular processes, including cell cycle progression, apoptosis, or DNA damage repair. The sequence is that of 26S proteasome non-ATPase regulatory subunit 7 (Psmd7) from Mus musculus (Mouse).